We begin with the raw amino-acid sequence, 341 residues long: Protein huluwa (341 aa).

At 1–36 (MVTLSPAYLPSDGGTQAASAAPSVEENWVVQPSLTL) the chain is on the extracellular side. A helical transmembrane segment spans residues 37–57 (LVLLLVPCVLLLFFLNCFLLF). The Cytoplasmic segment spans residues 58 to 341 (HRLPAFSLRK…PMMCSKQYWI (284 aa)). Residues 206-211 (VPPNTP) carry the VPPNSP motif motif.

It belongs to the huluwa family. As to quaternary structure, interacts with axin1; leading to promote the tankyrase-mediated degradation of axin. Interacts with axin2; leading to promote the tankyrase-mediated degradation of axin.

It localises to the cell membrane. In terms of biological role, key maternal determinant of the dorsal organizer and body axis formation in vertebrates that acts by promoting stabilization of beta-catenin (ctnnb1). Localizes on the plasma membrane of the future dorsal blastomeres in early blastulas and binds to and promotes the tankyrase-mediated degradation of axin (axin1 and axin2). Axin degradation results in stabilization and nuclear translocation of beta-catenin (ctnnb1) for activating organizer-specific target gene expression. In Xenopus laevis (African clawed frog), this protein is Protein huluwa.